A 338-amino-acid chain; its full sequence is DNA-directed RNA polymerase subunit alpha (338 aa).

The interval 1-225 (MLISQRPTIT…ELFGLARELN (225 aa)) is alpha N-terminal domain (alpha-NTD). The alpha C-terminal domain (alpha-CTD) stretch occupies residues 240–338 (TEYIAAYSMP…YIDVEAEDSE (99 aa)). The interval 319-338 (LEGYDAETGGYIDVEAEDSE) is disordered.

Belongs to the RNA polymerase alpha chain family. In terms of assembly, homodimer. The RNAP catalytic core consists of 2 alpha, 1 beta, 1 beta' and 1 omega subunit. When a sigma factor is associated with the core the holoenzyme is formed, which can initiate transcription.

The enzyme catalyses RNA(n) + a ribonucleoside 5'-triphosphate = RNA(n+1) + diphosphate. Functionally, DNA-dependent RNA polymerase catalyzes the transcription of DNA into RNA using the four ribonucleoside triphosphates as substrates. This chain is DNA-directed RNA polymerase subunit alpha, found in Corynebacterium glutamicum (strain R).